The following is a 166-amino-acid chain: Putative methyltransferase Rv1506c (166 aa).

Belongs to the methyltransferase superfamily.

Probably plays a role in host phagosome maturation arrest, as well as a role in the synthesis of acyltrehalose-containing glycolipids. This is Putative methyltransferase Rv1506c from Mycobacterium tuberculosis (strain ATCC 25618 / H37Rv).